Reading from the N-terminus, the 296-residue chain is Probable deoxyuridine 5'-triphosphate nucleotidohydrolase (296 aa).

The stretch at E66–Q102 forms a coiled coil.

It belongs to the dUTPase family.

The enzyme catalyses dUTP + H2O = dUMP + diphosphate + H(+). It functions in the pathway pyrimidine metabolism; dUMP biosynthesis; dUMP from dCTP (dUTP route): step 2/2. This enzyme is involved in nucleotide metabolism: it produces dUMP, the immediate precursor of thymidine nucleotides and it decreases the intracellular concentration of dUTP so that uracil cannot be incorporated into DNA. The protein is Probable deoxyuridine 5'-triphosphate nucleotidohydrolase of Acheta domesticus (House cricket).